The chain runs to 287 residues: Polyamine aminopropyltransferase (287 aa).

The PABS domain maps to 5–238 (EIWYETLHAN…GIMTFAWASN (234 aa)). Residue Q33 coordinates S-methyl-5'-thioadenosine. 2 residues coordinate spermidine: H64 and D88. Residues E108 and 140-141 (DG) contribute to the S-methyl-5'-thioadenosine site. D158 (proton acceptor) is an active-site residue. 158–161 (DCTD) contacts spermidine. P165 provides a ligand contact to S-methyl-5'-thioadenosine.

This sequence belongs to the spermidine/spermine synthase family. Homodimer or homotetramer.

The protein localises to the cytoplasm. The enzyme catalyses S-adenosyl 3-(methylsulfanyl)propylamine + putrescine = S-methyl-5'-thioadenosine + spermidine + H(+). Its pathway is amine and polyamine biosynthesis; spermidine biosynthesis; spermidine from putrescine: step 1/1. Catalyzes the irreversible transfer of a propylamine group from the amino donor S-adenosylmethioninamine (decarboxy-AdoMet) to putrescine (1,4-diaminobutane) to yield spermidine. This Pectobacterium carotovorum subsp. carotovorum (strain PC1) protein is Polyamine aminopropyltransferase.